A 1064-amino-acid polypeptide reads, in one-letter code: MSTITQFPSGNTQYRIEFDYLARTFVVVTLVNSSNPTLNRVLEVGRDYRFLNPTMIEMLVDQSGFDIVRIHRQTGTDLVVDFRNGSVLTASDLTTAELQAIHIAEEGRDQTVDLAKEYADAAGSSAGNAKDSEDEARRIAESIRAAGLIGYMTRRSFEKGYNVTTWSEVLLWEEDGDYYRWDGTLPKNVPAGSTPETSGGIGLGAWVSVGDAALRSQISNPEGAILYPELHRARWLDEKDARGWGAKGDGVTDDTAALTSALNDTPVGQKINGNGKTYKVTSLPDISRFINTRFVYERIPGQPLYYASEEFVQGELFKITDTPYYNAWPQDKAFVYENVIYAPYMGSDRHGVSRLHVSWVKSGDDGQTWSTPEWLTDLHPDYPTVNYHCMSMGVCRNRLFAMIETRTLAKNALTNCALWDRPMSRSLHLTGGITKAANQRYATIHVPDHGLFVGDFVNFSNSAVTGVSGDMTVATVIDKDNFTVLTPNQQTSDLNNAGKNWHMGTSFHKSPWRKTDLGLIPSVTEVHSFATIDNNGFAMGYHQGDVAPREVGLFYFPDAFNSPSNYVRRQIPSEYEPDASEPCIKYYDGVLYLITRGTRGDRLGSSLHRSRDIGQTWESLRFPHNVHHTTLPFAKVGDDLIMFGSERAENEWEAGAPDDRYKASYPRTFYARLNVNNWNADDIEWVNITDQIYQGGIVNSGVGVGSVVVKDNYIYYMFGGEDHFNPWTYGDNSAKDPFKSDGHPSDLYCYKMKIGPDNRVSRDFRYGAVPNRAVPVFFDTNGVRTVPAPMEFTGDLGLGHVTIRASTSSNIRSEVLMEGEYGFIGKSIPTDNPAGQRIIFCGGEGTSSTTGAQITLYGANNTDSRRIVYNGDEHLFQSADVKPYNDNVTALGGPSNRFTTAYLGSNPIVTSNGERKTEPVVFDDAFLDAWGDVHYIMYQWLDAVQLKGNDARIHFGVIAQQIRDVFIAHGLMDENSTNCRYAVLCYDKYPRMTDTVFSHNEIVEHTDEEGNVTTTEEPVYTEVVIHEEGEEWGVRPDGIFFAEAAYQRRKLERIEARLSALEQK.

2 BNR repeats span residues 360–371 and 496–503; these read VKSGDDGQTWST and NAGKNWHM. Active-site residues include Glu581 and Arg596. The BNR 3 repeat unit spans residues 608–619; it reads HRSRDIGQTWES. Arg647 is an active-site residue. Residues 911 to 1064 enclose the Peptidase S74 domain; sequence SNGERKTEPV…EARLSALEQK (154 aa). Positions 1044-1064 form a coiled coil; the sequence is AAYQRRKLERIEARLSALEQK.

Belongs to the glycosyl hydrolase 58 family. In terms of assembly, homotrimer. Interacts with sialic acid. In terms of processing, proteolytic cleavage and release of the chaperone in the host cytosol stabilizes the folded protein. The cleavage gives rise to the mature tail spike protein but is not essential for catalytic activity. However, release of the chaperone domain confers kinetic stability and processivity to the endosialidase.

The protein localises to the virion. The catalysed reaction is Endohydrolysis of (2-&gt;8)-alpha-sialosyl linkages in oligo- or poly(sialic) acids.. Receptor binding protein, which mediates the attachment to the host capsule. Degrades the alpha-2,8-linked polysialic acid of E.coli K1 capsule by cleaving within the polymer chain of polysialic acid. Its function is as follows. The C-terminal chaperone protein mediates homotrimerization and proper folding of the catalytic endo-N trimer. This chain is Tail spike protein, found in Escherichia coli (Bacteriophage K1F).